Consider the following 230-residue polypeptide: Ion-translocating oxidoreductase complex subunit E (230 aa).

Transmembrane regions (helical) follow at residues 18–38 (ALVQ…ATNA), 39–59 (LGLG…ISTL), 63–83 (TPTE…VSAV), 86–106 (LINA…PLIV), 128–148 (ALDG…LGAM), and 182–202 (PFLL…MLAG).

This sequence belongs to the NqrDE/RnfAE family. As to quaternary structure, the complex is composed of six subunits: RsxA, RsxB, RsxC, RsxD, RsxE and RsxG.

It localises to the cell inner membrane. Its function is as follows. Part of a membrane-bound complex that couples electron transfer with translocation of ions across the membrane. Required to maintain the reduced state of SoxR. In Escherichia fergusonii (strain ATCC 35469 / DSM 13698 / CCUG 18766 / IAM 14443 / JCM 21226 / LMG 7866 / NBRC 102419 / NCTC 12128 / CDC 0568-73), this protein is Ion-translocating oxidoreductase complex subunit E.